A 464-amino-acid chain; its full sequence is 17,18-epoxy-17-hydroxycur-19-ene N-malonyltransferase (464 aa).

Active-site proton acceptor residues include His191 and Asp403.

Belongs to the plant acyltransferase family. As to quaternary structure, monomer. As to expression, mainly expressed in roots.

Its subcellular location is the cytoplasm. It catalyses the reaction 17,18-epoxy-17-hydroxycur-19-ene + malonyl-CoA = prestrychnine + CoA. It participates in alkaloid biosynthesis. Functionally, malonylransferase involved in the biosynthesis of curare monoterpene indole alkaloids (MIAs), natural products such as strychnine, a neurotoxic compound used as a pesticide to control rodents, and its pharmacologically active derivatives, including brucine, used to regulate blood pressure. Curare alkaloids act as animal glycine receptor antagonists. Catalyzes the conversion of 17,18-epoxy-17-hydroxycur-19-ene (Wieland-Gumlich aldehyde) to prestrychnine, which is spontaneously converted into strychnine and isostrychnine. The chain is 17,18-epoxy-17-hydroxycur-19-ene N-malonyltransferase from Strychnos nux-vomica (Poison nut).